The chain runs to 198 residues: Recombination protein RecR (198 aa).

The C4-type zinc finger occupies 57–72; it reads CSICGNLTDDDPCHIC. The 96-residue stretch at 80–175 folds into the Toprim domain; the sequence is ETILVVEASK…KVTRLARGLA (96 aa).

Belongs to the RecR family.

Functionally, may play a role in DNA repair. It seems to be involved in an RecBC-independent recombinational process of DNA repair. It may act with RecF and RecO. This chain is Recombination protein RecR, found in Streptococcus equi subsp. zooepidemicus (strain MGCS10565).